Reading from the N-terminus, the 186-residue chain is Large ribosomal subunit protein uL16 (186 aa).

The protein belongs to the universal ribosomal protein uL16 family.

In Nanoarchaeum equitans (strain Kin4-M), this protein is Large ribosomal subunit protein uL16.